Here is a 357-residue protein sequence, read N- to C-terminus: MALERELLVATQAVRKASLLTKRIQSEVISHKDSTTITKNDNSPVTTGDYAAQTIIINAIKSNFPDDKVVGEESSSGLSDAFVSGILNEIKANDEVYNKNYKKDDFLFTNDQFPLKSLEDVRQIIDFGNYEGGRKGRFWCLDPIDGTKGFLRGEQFAVCLALIVDGVVQLGCIGCPNLVLSSYGAQDLKGHESFGYIFRAVRGLGAFYSPSSDAESWTKIHVRHLKDTKDMITLEGVEKGHSSHDEQTAIKNKLNISKSLHLDSQAKYCLLALGLADVYLRLPIKLSYQEKIWDHAAGNVIVHEAGGIHTDAMEDVPLDFGNGRTLATKGVIASSGPRELHDLVVSTSCDVIQSRNA.

D49 functions as the Proton acceptor in the catalytic mechanism. 4 residues coordinate Mg(2+): E72, D142, I144, and D145. The Proton acceptor role is filled by T147. Residues T147, H241, S264, K267, R281, and D294 each contribute to the adenosine 3',5'-bisphosphate site. Residues H241, S264, K267, R281, and D294 each contribute to the AMP site. D294 contributes to the Mg(2+) binding site.

The protein belongs to the inositol monophosphatase superfamily. Mg(2+) serves as cofactor.

The protein resides in the cytoplasm. Its subcellular location is the nucleus. It catalyses the reaction 3'-phosphoadenylyl sulfate + H2O = adenosine 5'-phosphosulfate + phosphate. The enzyme catalyses adenosine 3',5'-bisphosphate + H2O = AMP + phosphate. It carries out the reaction adenosine 2',5'-bisphosphate + H2O = AMP + phosphate. Phosphatase activity is very sensitive to lithium and moderately sensitive to sodium. The inhibitory effects of lithium and sodium are overcome by high concentrations of potassium. Lithium exerts its inhibitory action by blocking the products of the PAP hydrolysis at the active site. Its function is as follows. Phosphatase that converts adenosine 3'-phosphate 5'-phosphosulfate (PAPS) to adenosine 5'-phosphosulfate (APS) and 3'(2')-phosphoadenosine 5'-phosphate (PAP) to AMP. May regulate the flux of sulfur in the sulfur-activation pathway by converting PAPS to APS. Involved in salt tolerance. Confers resistance to lithium. Shows no activity on inositol mono- and diphosphates, 3'-AMP, AMP, nicotinamide adenine dinucleotide phosphate (NADP), and p-nitrophenylphosphate. This chain is 3'(2'),5'-bisphosphate nucleotidase (MET22), found in Saccharomyces cerevisiae (strain ATCC 204508 / S288c) (Baker's yeast).